Reading from the N-terminus, the 155-residue chain is Small ribosomal subunit protein uS7 (155 aa).

The protein belongs to the universal ribosomal protein uS7 family. As to quaternary structure, part of the 30S ribosomal subunit. Contacts proteins S9 and S11.

One of the primary rRNA binding proteins, it binds directly to 16S rRNA where it nucleates assembly of the head domain of the 30S subunit. Is located at the subunit interface close to the decoding center, probably blocks exit of the E-site tRNA. This Chlorobium phaeovibrioides (strain DSM 265 / 1930) (Prosthecochloris vibrioformis (strain DSM 265)) protein is Small ribosomal subunit protein uS7.